A 96-amino-acid chain; its full sequence is (4S)-4-hydroxy-5-phosphonooxypentane-2,3-dione isomerase (96 aa).

Positions 2–91 (HVTLVEINVH…MTGPRTKKVF (90 aa)) constitute an ABM domain.

The protein belongs to the LsrG family. Homodimer.

It localises to the cytoplasm. The catalysed reaction is (2S)-2-hydroxy-3,4-dioxopentyl phosphate = 3-hydroxy-2,4-dioxopentyl phosphate. In terms of biological role, involved in the degradation of phospho-AI-2, thereby terminating induction of the lsr operon and closing the AI-2 signaling cycle. Catalyzes the conversion of (4S)-4-hydroxy-5-phosphonooxypentane-2,3-dione (P-DPD) to 3-hydroxy-5-phosphonooxypentane-2,4-dione (P-HPD). This Salmonella choleraesuis (strain SC-B67) protein is (4S)-4-hydroxy-5-phosphonooxypentane-2,3-dione isomerase.